Reading from the N-terminus, the 273-residue chain is MVLIKEYRVCMPLTVEEYKIGQLYMIARHSLEQSEEGEGVEVVENKPCEDPVHGKGQYTEKHIHLSSRLPYWIQAICPRVFYVIEKSWNYYPYTLTEYTCSFIPKLNVLIKTKYEDNNGSTENCLDLTEDELKVRTVDHLDIAFDEVSAKHYKKEEDPKFFKSEKTNRGPLIEGWRETDKPIMCSYKVVHASFEVWGLQTKVEDFIQRGIREILLLGHRQAFAWVDEWHGMTLEDVRAYERQKQAETNEKIHNTSGGANAAANAKEANDGDID.

The tract at residues 244 to 273 is disordered; it reads QAETNEKIHNTSGGANAAANAKEANDGDID.

It belongs to the PtdIns transfer protein family. PI transfer class IIB subfamily.

Phosphatidylinositol transfer proteins mediate the monomeric transport of lipids by shielding a lipid from the aqueous environment and binding the lipid in a hydrophobic cavity. This Drosophila melanogaster (Fruit fly) protein is Cytoplasmic phosphatidylinositol transfer protein 1 (rdgBbeta).